The sequence spans 630 residues: Sodium-dependent serotonin transporter (630 aa).

Composition is skewed to polar residues over residues 1–11 (METTPLNSQKV) and 42–55 (QISNGYSAVPSTSA). The disordered stretch occupies residues 1–63 (METTPLNSQK…SAGDEAPHST (63 aa)). Residues 1-87 (METTPLNSQK…ERETWGKKMD (87 aa)) are Cytoplasmic-facing. A Phosphotyrosine modification is found at Y47. Residues 88–112 (FLLSVIGYAVDLGNIWRFPYICYQN) form a helical membrane-spanning segment. The Na(+) site is built by G94, A96, V97, D98, and N101. Serotonin is bound at residue D98. Over 113–115 (GGG) the chain is Extracellular. The chain crosses the membrane as a helical span at residues 116–135 (AFLLPYTIMAIFGGIPLFYM). The Cytoplasmic portion of the chain corresponds to 136–160 (ELALGQYHRNGCISIWKKICPIFKG). The residue at position 142 (Y142) is a Phosphotyrosine. A helical membrane pass occupies residues 161–186 (IGYAICIIAFYIASYYNTIIAWALYY). Residues 187-252 (LISSFTDQLP…KGLQDLGTIS (66 aa)) lie on the Extracellular side of the membrane. C200 and C209 are joined by a disulfide. N-linked (GlcNAc...) asparagine glycosylation is found at N208 and N217. The chain crosses the membrane as a helical span at residues 253–271 (WQLALCIMLIFTIIYFSIW). Over 272–277 (KGVKTS) the chain is Cytoplasmic. Phosphothreonine is present on T276. A helical transmembrane segment spans residues 278-297 (GKVVWVTATFPYIVLSVLLV). Over 298-324 (RGATLPGAWRGVVFYLKPNWQKLLETG) the chain is Extracellular. A helical transmembrane segment spans residues 325–347 (VWVDAAAQIFFSLGPGFGVLLAF). S336 is a Na(+) binding site. Topologically, residues 348–360 (ASYNKFNNNCYQD) are cytoplasmic. The chain crosses the membrane as a helical span at residues 361-380 (ALVTSVVNCMTSFVSGFVIF). N368 provides a ligand contact to Na(+). Topologically, residues 381-421 (TVLGYMAEMRNEDVSEVAKDAGPSLLFITYAEAIANMPAST) are extracellular. The helical transmembrane segment at 422 to 443 (FFAIIFFLMLITLGLDSTFAGL) threads the bilayer. L434, D437, and S438 together coordinate Na(+). T439 contacts serotonin. Topologically, residues 444–463 (EGVITAVLDEFPHIWAKRRE) are cytoplasmic. A helical transmembrane segment spans residues 464 to 483 (WFVLIVVITCILGSLLTLTS). Residues 484-494 (GGAYVVTLLEE) lie on the Extracellular side of the membrane. E494 and Y495 together coordinate serotonin. A helical membrane pass occupies residues 495-516 (YATGPAVLTVALIEAVVVSWFY). The Cytoplasmic segment spans residues 517–538 (GITQFCSDVKEMLGFSPGWFWR). Residues 539–558 (ICWVAISPLFLLFIICSFLM) traverse the membrane as a helical segment. Serotonin is bound by residues F556 and S559. Topologically, residues 559 to 574 (SPPQLRLFQYNYPHWS) are extracellular. A helical transmembrane segment spans residues 575–595 (IILGYCIGTSSVICIPIYIIY). Topologically, residues 596-630 (RLISTPGTLKERIIKSITPETPTEIPCGDIRMNAV) are cytoplasmic. Residues 616 to 624 (TPTEIPCGD) are interaction with RAB4A.

The protein belongs to the sodium:neurotransmitter symporter (SNF) (TC 2.A.22) family. SLC6A4 subfamily. Monomer or homooligomer. Interacts (via C-terminus) with SCAMP2; the interaction is direct and retains transporter molecules intracellularly. Interacts with filamentous actin and STX1A. Interacts (via the N-terminus) with STX1A (via the H3 domain); this interaction regulates SLC4A6 channel conductance. Interacts with SEC23A, SEC24C and PATJ. Interacts with NOS1; the interaction may diminish the cell surface localization of SERT in the brain and, correspondingly, reduce serotonin reuptake. Interacts with TGFB1I1. Interacts with ITGAV:ITGB3. Interacts (via C-terminus) with ITGB3; this interaction regulates SLC6A4 trafficking. Post-translationally, phosphorylation at Thr-276 increases 5-HT uptake and is required for cGMP-mediated SERT regulation. Expressed in the lung, midbrain and brainstem regions. Expressed in brainstem raphe neurons.

It localises to the cell membrane. The protein localises to the endomembrane system. The protein resides in the endosome membrane. It is found in the synapse. Its subcellular location is the cell junction. It localises to the focal adhesion. The protein localises to the cell projection. The protein resides in the neuron projection. It catalyses the reaction serotonin(out) + K(+)(in) + Na(+)(out) + H(+)(in) = serotonin(in) + K(+)(out) + Na(+)(in) + H(+)(out). Functionally, serotonin transporter that cotransports serotonin with one Na(+) ion in exchange for one K(+) ion and possibly one proton in an overall electroneutral transport cycle. Transports serotonin across the plasma membrane from the extracellular compartment to the cytosol thus limiting serotonin intercellular signaling. Essential for serotonin homeostasis in the central nervous system. In the developing somatosensory cortex, acts in glutamatergic neurons to control serotonin uptake and its trophic functions accounting for proper spatial organization of cortical neurons and elaboration of sensory circuits. In the mature cortex, acts primarily in brainstem raphe neurons to mediate serotonin uptake from the synaptic cleft back into the pre-synaptic terminal thus terminating serotonin signaling at the synapse. Modulates mucosal serotonin levels in the gastrointestinal tract through uptake and clearance of serotonin in enterocytes. Required for enteric neurogenesis and gastrointestinal reflexes. Regulates blood serotonin levels by ensuring rapid high affinity uptake of serotonin from plasma to platelets, where it is further stored in dense granules via vesicular monoamine transporters and then released upon stimulation. Mechanistically, the transport cycle starts with an outward-open conformation having Na1(+) and Cl(-) sites occupied. The binding of a second extracellular Na2(+) ion and serotonin substrate leads to structural changes to outward-occluded to inward-occluded to inward-open, where the Na2(+) ion and serotonin are released into the cytosol. Binding of intracellular K(+) ion induces conformational transitions to inward-occluded to outward-open and completes the cycle by releasing K(+) possibly together with a proton bound to Asp-98 into the extracellular compartment. Na1(+) and Cl(-) ions remain bound throughout the transport cycle. Additionally, displays serotonin-induced channel-like conductance for monovalent cations, mainly Na(+) ions. The channel activity is uncoupled from the transport cycle and may contribute to the membrane resting potential or excitability. The sequence is that of Sodium-dependent serotonin transporter from Mus musculus (Mouse).